The chain runs to 396 residues: S-adenosylmethionine synthase 3 (396 aa).

Residue Glu12 participates in Mg(2+) binding. Position 18 (His18) interacts with ATP. Position 46 (Glu46) interacts with K(+). Residues Glu59 and Gln102 each coordinate L-methionine. Residues 170–172 (DGK), 238–241 (SGRF), Asp249, 255–256 (RK), Ala272, Lys276, and Lys280 each bind ATP. Position 249 (Asp249) interacts with L-methionine. Lys280 contacts L-methionine.

It belongs to the AdoMet synthase family. In terms of assembly, homotetramer. The cofactor is Mn(2+). Requires Mg(2+) as cofactor. It depends on Co(2+) as a cofactor. K(+) is required as a cofactor.

The protein localises to the cytoplasm. It catalyses the reaction L-methionine + ATP + H2O = S-adenosyl-L-methionine + phosphate + diphosphate. The protein operates within amino-acid biosynthesis; S-adenosyl-L-methionine biosynthesis; S-adenosyl-L-methionine from L-methionine: step 1/1. Functionally, catalyzes the formation of S-adenosylmethionine from methionine and ATP. The reaction comprises two steps that are both catalyzed by the same enzyme: formation of S-adenosylmethionine (AdoMet) and triphosphate, and subsequent hydrolysis of the triphosphate. This is S-adenosylmethionine synthase 3 (METK3) from Oryza sativa subsp. japonica (Rice).